The sequence spans 110 residues: Large ribosomal subunit protein uL22 (110 aa).

Belongs to the universal ribosomal protein uL22 family. As to quaternary structure, part of the 50S ribosomal subunit.

In terms of biological role, this protein binds specifically to 23S rRNA; its binding is stimulated by other ribosomal proteins, e.g. L4, L17, and L20. It is important during the early stages of 50S assembly. It makes multiple contacts with different domains of the 23S rRNA in the assembled 50S subunit and ribosome. The globular domain of the protein is located near the polypeptide exit tunnel on the outside of the subunit, while an extended beta-hairpin is found that lines the wall of the exit tunnel in the center of the 70S ribosome. The sequence is that of Large ribosomal subunit protein uL22 from Campylobacter fetus subsp. fetus (strain 82-40).